Here is a 583-residue protein sequence, read N- to C-terminus: Bifunctional lycopene cyclase/phytoene synthase (583 aa).

A lycopene beta-cyclase region spans residues 1 to 243; sequence MGFDYALVHL…IVFGQLAFDN (243 aa). A run of 7 helical transmembrane segments spans residues 3–23, 35–55, 75–97, 120–140, 151–171, 173–193, and 221–241; these read FDYA…LTWL, KVGY…SYLI, IPLE…YLLL, YMRL…WRCI, LILV…YQFI, ALPV…LWVV, and IEEA…QLAF. The phytoene synthase stretch occupies residues 250-583; it reads TFPHLFTGPS…MVAWRTLNSK (334 aa).

It in the N-terminal section; belongs to the lycopene beta-cyclase family. This sequence in the C-terminal section; belongs to the phytoene/squalene synthase family.

It is found in the membrane. It catalyses the reaction all-trans-lycopene = gamma-carotene. The catalysed reaction is gamma-carotene = all-trans-beta-carotene. It carries out the reaction 2 (2E,6E,10E)-geranylgeranyl diphosphate = 15-cis-phytoene + 2 diphosphate. It functions in the pathway carotenoid biosynthesis; beta-carotene biosynthesis. The protein operates within carotenoid biosynthesis; phytoene biosynthesis; all-trans-phytoene from geranylgeranyl diphosphate: step 1/1. In terms of biological role, bifunctional enzyme that catalyzes the reactions from geranylgeranyl diphosphate to phytoene (phytoene synthase) and lycopene to beta-carotene via the intermediate gamma-carotene (lycopene cyclase). The chain is Bifunctional lycopene cyclase/phytoene synthase from Pyrenophora tritici-repentis (strain Pt-1C-BFP) (Wheat tan spot fungus).